A 331-amino-acid chain; its full sequence is Ribose-phosphate pyrophosphokinase (331 aa).

55 to 57 (DGE) serves as a coordination point for ATP. The Mg(2+) site is built by His148 and Asp187. The active site involves Lys211. D-ribose 5-phosphate contacts are provided by residues Arg213, Asp237, and 241–245 (DTGGT).

Belongs to the ribose-phosphate pyrophosphokinase family. Class I subfamily. As to quaternary structure, homohexamer. Mg(2+) is required as a cofactor.

Its subcellular location is the cytoplasm. The enzyme catalyses D-ribose 5-phosphate + ATP = 5-phospho-alpha-D-ribose 1-diphosphate + AMP + H(+). The protein operates within metabolic intermediate biosynthesis; 5-phospho-alpha-D-ribose 1-diphosphate biosynthesis; 5-phospho-alpha-D-ribose 1-diphosphate from D-ribose 5-phosphate (route I): step 1/1. Functionally, involved in the biosynthesis of the central metabolite phospho-alpha-D-ribosyl-1-pyrophosphate (PRPP) via the transfer of pyrophosphoryl group from ATP to 1-hydroxyl of ribose-5-phosphate (Rib-5-P). The sequence is that of Ribose-phosphate pyrophosphokinase from Parasynechococcus marenigrum (strain WH8102).